The primary structure comprises 247 residues: Carboxy-S-adenosyl-L-methionine synthase (247 aa).

S-adenosyl-L-methionine is bound by residues tyrosine 40, glycine 65–serine 67, aspartate 90–asparagine 91, aspartate 122–isoleucine 123, asparagine 137, and arginine 204.

This sequence belongs to the class I-like SAM-binding methyltransferase superfamily. Cx-SAM synthase family. Homodimer.

It carries out the reaction prephenate + S-adenosyl-L-methionine = carboxy-S-adenosyl-L-methionine + 3-phenylpyruvate + H2O. Functionally, catalyzes the conversion of S-adenosyl-L-methionine (SAM) to carboxy-S-adenosyl-L-methionine (Cx-SAM). This chain is Carboxy-S-adenosyl-L-methionine synthase, found in Stutzerimonas stutzeri (strain A1501) (Pseudomonas stutzeri).